The primary structure comprises 778 residues: Endonuclease MutS2 (778 aa).

Gly-328 to Thr-335 provides a ligand contact to ATP. Positions Leu-702–Lys-777 constitute a Smr domain.

It belongs to the DNA mismatch repair MutS family. MutS2 subfamily. As to quaternary structure, homodimer. Binds to stalled ribosomes, contacting rRNA.

Functionally, endonuclease that is involved in the suppression of homologous recombination and thus may have a key role in the control of bacterial genetic diversity. Its function is as follows. Acts as a ribosome collision sensor, splitting the ribosome into its 2 subunits. Detects stalled/collided 70S ribosomes which it binds and splits by an ATP-hydrolysis driven conformational change. Acts upstream of the ribosome quality control system (RQC), a ribosome-associated complex that mediates the extraction of incompletely synthesized nascent chains from stalled ribosomes and their subsequent degradation. Probably generates substrates for RQC. This Streptococcus pneumoniae (strain Hungary19A-6) protein is Endonuclease MutS2.